The following is a 796-amino-acid chain: Protocadherin beta-3 (796 aa).

Positions 1–26 (MEAGGERFLRQRQVLLLFVFLGGSLA) are cleaved as a signal peptide. Residues 27–690 (GSESRRYSVA…AQADLLTVYL (664 aa)) are Extracellular-facing. Cadherin domains follow at residues 35-133 (VAEE…SPVF), 138-242 (MHLK…APEF), 247-347 (YEVA…PPEL), 352-451 (VNSP…APAF), and 456-561 (YTLF…SPFV). An N-linked (GlcNAc...) asparagine glycan is attached at asparagine 169. Asparagine 418 and asparagine 436 each carry an N-linked (GlcNAc...) asparagine glycan. An N-linked (GlcNAc...) asparagine glycan is attached at asparagine 567. The Cadherin 6 domain maps to 568–671 (GSAPCTELVP…LVDGFSQPYL (104 aa)). Residues 691-711 (VVALASVSSLFLFSVLLFVAV) traverse the membrane as a helical segment. Residues 712 to 796 (RLCRRSRAAS…PSFRKSFEFS (85 aa)) are Cytoplasmic-facing.

The protein resides in the cell membrane. Its function is as follows. Potential calcium-dependent cell-adhesion protein. May be involved in the establishment and maintenance of specific neuronal connections in the brain. In Pan troglodytes (Chimpanzee), this protein is Protocadherin beta-3 (PCDHB3).